The chain runs to 27 residues: GCGGVCAYGESCPSSCNTCYSAQCTAQ.

Cystine bridges form between Cys2–Cys16, Cys6–Cys19, and Cys12–Cys24. Position 13 is a 4-hydroxyproline (Pro13).

In terms of tissue distribution, expressed by the venom duct.

The protein resides in the secreted. Its function is as follows. Probable neurotoxin that inhibits ion channels. This is Conotoxin Bt9.2 from Conus betulinus (Beech cone).